Reading from the N-terminus, the 376-residue chain is Heme chaperone HemW (376 aa).

A Radical SAM core domain is found at 1–233 (MFTLPPISLY…DKLLKKAGYK (233 aa)). Residue tyrosine 10 participates in S-adenosyl-L-methionine binding. Cysteine 16, cysteine 20, and cysteine 23 together coordinate [4Fe-4S] cluster. S-adenosyl-L-methionine contacts are provided by residues glycine 66, 67 to 68 (GT), glutamate 99, glutamine 126, arginine 138, and aspartate 162.

The protein belongs to the anaerobic coproporphyrinogen-III oxidase family. HemW subfamily. [4Fe-4S] cluster is required as a cofactor.

The protein resides in the cytoplasm. In terms of biological role, probably acts as a heme chaperone, transferring heme to an unknown acceptor. Binds one molecule of heme per monomer, possibly covalently. Binds 1 [4Fe-4S] cluster. The cluster is coordinated with 3 cysteines and an exchangeable S-adenosyl-L-methionine. In Buchnera aphidicola subsp. Acyrthosiphon pisum (strain APS) (Acyrthosiphon pisum symbiotic bacterium), this protein is Heme chaperone HemW.